Reading from the N-terminus, the 100-residue chain is UPF0235 protein TC_0667 (100 aa).

It belongs to the UPF0235 family.

This is UPF0235 protein TC_0667 from Chlamydia muridarum (strain MoPn / Nigg).